The chain runs to 154 residues: Myoglobin (154 aa).

The Globin domain occupies 2 to 148 (GLSDQEWQQV…FRNDMASKYK (147 aa)). His65 lines the nitrite pocket. O2 is bound at residue His65. His94 is a binding site for heme b.

The protein belongs to the globin family. In terms of assembly, monomeric.

It localises to the cytoplasm. The protein localises to the sarcoplasm. The catalysed reaction is Fe(III)-heme b-[protein] + nitric oxide + H2O = Fe(II)-heme b-[protein] + nitrite + 2 H(+). It carries out the reaction H2O2 + AH2 = A + 2 H2O. In terms of biological role, monomeric heme protein which primary function is to store oxygen and facilitate its diffusion within muscle tissues. Reversibly binds oxygen through a pentacoordinated heme iron and enables its timely and efficient release as needed during periods of heightened demand. Depending on the oxidative conditions of tissues and cells, and in addition to its ability to bind oxygen, it also has a nitrite reductase activity whereby it regulates the production of bioactive nitric oxide. Under stress conditions, like hypoxia and anoxia, it also protects cells against reactive oxygen species thanks to its pseudoperoxidase activity. This chain is Myoglobin (MB), found in Aethia pygmaea (Whiskered auklet).